A 348-amino-acid chain; its full sequence is Ion-translocating oxidoreductase complex subunit D (348 aa).

3 helical membrane-spanning segments follow: residues 20–39, 72–91, and 120–140; these read LMKW…TYFF, ALRD…AIPP, and PFNP…VQMT. The residue at position 187 (threonine 187) is an FMN phosphoryl threonine. 5 helical membrane passes run 214–234, 241–261, 266–286, 300–320, and 321–341; these read LAGV…LVLI, WHIP…FLMF, TASP…FFIA, LVFG…GGFP, and DGVA…DYYT.

This sequence belongs to the NqrB/RnfD family. As to quaternary structure, the complex is composed of six subunits: RnfA, RnfB, RnfC, RnfD, RnfE and RnfG. FMN serves as cofactor.

Its subcellular location is the cell inner membrane. In terms of biological role, part of a membrane-bound complex that couples electron transfer with translocation of ions across the membrane. The polypeptide is Ion-translocating oxidoreductase complex subunit D (Vibrio atlanticus (strain LGP32) (Vibrio splendidus (strain Mel32))).